Reading from the N-terminus, the 446-residue chain is Telomere-binding protein 51 kDa subunit (446 aa).

Belongs to the telombin family. As to quaternary structure, monomer.

Its subcellular location is the nucleus. It localises to the chromosome. It is found in the telomere. May function as protective capping of the single-stranded telomeric overhang. May also participate in telomere length regulation during DNA replication. Binds specifically to the T4G4-containing extension on the 3'strand and protects this region of the telomere from nuclease digestion and chemical modification. In Euplotes crassus, this protein is Telomere-binding protein 51 kDa subunit.